The following is a 362-amino-acid chain: Transcription factor bHLH128 (362 aa).

Positions 1–16 (MYQSSSSTSSSSQRSS) are enriched in low complexity. Disordered stretches follow at residues 1-23 (MYQS…GGGL), 78-106 (SDST…SNKD), 120-140 (SQQH…YSLA), and 162-184 (LNQP…HSRL). Polar residues predominate over residues 78 to 96 (SDSTTCGVNNSSDGQKQLG). A compositionally biased stretch (polar residues) spans 162–173 (LNQPTSDYSPQG). At serine 189 the chain carries Phosphoserine. Residues 289 to 339 (CATHPRSIAERERRTRISGKLKKLQDLVPNMDKQTSYSDMLDLAVQHIKGL) enclose the bHLH domain.

In terms of assembly, homodimer.

The protein resides in the nucleus. This Arabidopsis thaliana (Mouse-ear cress) protein is Transcription factor bHLH128 (BHLH128).